The following is a 237-amino-acid chain: ATP-dependent dethiobiotin synthetase BioD (237 aa).

21 to 26 lines the ATP pocket; sequence GVGKTV. Thr-25 provides a ligand contact to Mg(2+). The active site involves Lys-48. A substrate-binding site is contributed by Thr-52. ATP is bound by residues Asp-56, 117-120, 177-178, and 209-211; these read EALG, SC, and PYL. Residues Asp-56 and Glu-117 each contribute to the Mg(2+) site.

The protein belongs to the dethiobiotin synthetase family. As to quaternary structure, homodimer. The cofactor is Mg(2+).

It localises to the cytoplasm. The catalysed reaction is (7R,8S)-7,8-diammoniononanoate + CO2 + ATP = (4R,5S)-dethiobiotin + ADP + phosphate + 3 H(+). It catalyses the reaction (7R,8S)-8-amino-7-(carboxyamino)nonanoate + ATP = (4R,5S)-dethiobiotin + ADP + phosphate + H(+). It participates in cofactor biosynthesis; biotin biosynthesis; biotin from 7,8-diaminononanoate: step 1/2. Catalyzes a mechanistically unusual reaction, the ATP-dependent insertion of CO2 between the N7 and N8 nitrogen atoms of 7,8-diaminopelargonic acid (DAPA, also called 7,8-diammoniononanoate) to form a ureido ring. This cyanobacterium does not encode bioA (which catalyzes the formation of the precursor for this reaction in the cannonical pathway), instead it encodes bioU, which replaces bioA and also performs the first half of the cannonical BioD reaction. Thus in this bacteria BioD has a different substrate. In Synechocystis replacement of bioU by bioA from E.coli leads to biotin synthesis, showing BioD can use the 'cannonical' 7,8-diammoniononanoate as a substrate. The protein is ATP-dependent dethiobiotin synthetase BioD of Synechocystis sp. (strain ATCC 27184 / PCC 6803 / Kazusa).